The following is a 199-amino-acid chain: Photosystem II D1 precursor processing protein PSB27-H2, chloroplastic (199 aa).

Belongs to the Psb27 family. Interacts with the C-terminus of both the precursor and mature form of D1.

The protein localises to the plastid. It localises to the chloroplast thylakoid lumen. In terms of biological role, required, but not essential, for D1 (psbA) precursor processing and thus correct photosystem II assembly (PSII). This Arabidopsis thaliana (Mouse-ear cress) protein is Photosystem II D1 precursor processing protein PSB27-H2, chloroplastic (PSB27-2).